The primary structure comprises 72 residues: Gene 83 protein (72 aa).

The protein is Gene 83 protein (83) of Mycobacterium phage L5 (Mycobacteriophage L5).